The sequence spans 132 residues: MAYSTYGRHITMDLREVAFEKLNDVRFLKEVMYEAAAQCGATVVGESFVQFSPQGVTGVLVLSESHLSIHTYPEEGFAAIDCYTCGYTVDPAVACDYLKAALGGRVVGYRALRRGSGAIEDLTTLHLAAANN.

Serine 65 (schiff-base intermediate with substrate; via pyruvic acid) is an active-site residue. Serine 65 carries the post-translational modification Pyruvic acid (Ser); by autocatalysis. Histidine 70 acts as the Proton acceptor; for processing activity in catalysis. The active-site Proton donor; for catalytic activity is the cysteine 85.

Belongs to the prokaryotic AdoMetDC family. Type 1 subfamily. In terms of assembly, heterotetramer of two alpha and two beta chains arranged as a dimer of alpha/beta heterodimers. It depends on pyruvate as a cofactor. Post-translationally, is synthesized initially as an inactive proenzyme. Formation of the active enzyme involves a self-maturation process in which the active site pyruvoyl group is generated from an internal serine residue via an autocatalytic post-translational modification. Two non-identical subunits are generated from the proenzyme in this reaction, and the pyruvate is formed at the N-terminus of the alpha chain, which is derived from the carboxyl end of the proenzyme. The post-translation cleavage follows an unusual pathway, termed non-hydrolytic serinolysis, in which the side chain hydroxyl group of the serine supplies its oxygen atom to form the C-terminus of the beta chain, while the remainder of the serine residue undergoes an oxidative deamination to produce ammonia and the pyruvoyl group blocking the N-terminus of the alpha chain.

The enzyme catalyses S-adenosyl-L-methionine + H(+) = S-adenosyl 3-(methylsulfanyl)propylamine + CO2. Its pathway is amine and polyamine biosynthesis; S-adenosylmethioninamine biosynthesis; S-adenosylmethioninamine from S-adenosyl-L-methionine: step 1/1. In terms of biological role, catalyzes the decarboxylation of S-adenosylmethionine to S-adenosylmethioninamine (dcAdoMet), the propylamine donor required for the synthesis of the polyamines spermine and spermidine from the diamine putrescine. The sequence is that of S-adenosylmethionine decarboxylase proenzyme from Symbiobacterium thermophilum (strain DSM 24528 / JCM 14929 / IAM 14863 / T).